The chain runs to 247 residues: DNA polymerase sliding clamp (247 aa).

The protein belongs to the PCNA family. As to quaternary structure, homotrimer. The subunits circularize to form a toroid; DNA passes through its center. Replication factor C (RFC) is required to load the toroid on the DNA.

In terms of biological role, sliding clamp subunit that acts as a moving platform for DNA processing. Responsible for tethering the catalytic subunit of DNA polymerase and other proteins to DNA during high-speed replication. The polypeptide is DNA polymerase sliding clamp (Haloarcula marismortui (strain ATCC 43049 / DSM 3752 / JCM 8966 / VKM B-1809) (Halobacterium marismortui)).